Reading from the N-terminus, the 515-residue chain is MCAVTVVPDPTCCGTLSFKVPKDAKKGKHLGTFDIRQAIMDYGGLHSQEWCAKGIVNPTFTVRMHAPRNAFAGLSIACTFDDYKRIDLPALGNECPPSEMFELPTKVFMLKDADVHEWQFNYGELTGHGLCNWANVATQPTLYFFVASTNQVTMAADWQCIVTMHVDMGPVIDRFELNPTMTWPIQLGDTFAIDRYYEAKEIKLDGSTSMLSISYNFGGPVKHSKKHAISYSRAVMSRNLGWSGTISGSVKSVSSLFCTASFVIFPWECEAPPTLRQVLWGPHQIMHGDGQFEIAIKTRLHSAATTEEGFGRLGILPLSGPIAPDAHVGSYEFIVHINTWRPDSQVHPPMFSSSELYNWFTLTNLKPDANTGVVNFDIPGYIHDFASKDATVTLASNPLSWLVAATGWHYGEVDLCISWSRSKQAQAQEGSVSITTNYRDWGAYWQGQARIYDLRRTEAEIPIFLGSYAGATPSGALGKQNYVRISIVNAKDIVALRVCLRPKSIKFWGRSATLF.

Positions M1–C2 are excised as a propeptide.

As to quaternary structure, the virus coat is formed of 60 copies of the coat protein.

Its subcellular location is the virion. The chain is Capsid protein from Tobacco ringspot virus (TobRV).